The chain runs to 706 residues: Amino-acid acetyltransferase, mitochondrial (706 aa).

2 disordered regions span residues 1 to 25 (MSSRVLASRAAQPLKRHPTVVGAGD) and 367 to 403 (NPANNSQGESVVTNPISDSNAVSESASTEPTSTPAKQ). A mitochondrion-targeting transit peptide spans 1-35 (MSSRVLASRAAQPLKRHPTVVGAGDEAYPTPRRCF). Positions 367 to 388 (NPANNSQGESVVTNPISDSNAV) are enriched in polar residues. The segment covering 389-401 (SESASTEPTSTPA) has biased composition (low complexity). One can recognise an N-acetyltransferase domain in the interval 527-696 (TRPNMNLDDP…YEAVCRSIQP (170 aa)).

It belongs to the acetyltransferase family.

Its subcellular location is the mitochondrion. The enzyme catalyses L-glutamate + acetyl-CoA = N-acetyl-L-glutamate + CoA + H(+). It functions in the pathway amino-acid biosynthesis; L-arginine biosynthesis; N(2)-acetyl-L-ornithine from L-glutamate: step 1/4. N-acetylglutamate synthase involved in arginine biosynthesis. The polypeptide is Amino-acid acetyltransferase, mitochondrial (arg2) (Emericella nidulans (strain FGSC A4 / ATCC 38163 / CBS 112.46 / NRRL 194 / M139) (Aspergillus nidulans)).